A 296-amino-acid chain; its full sequence is Arginine/serine-rich protein 1 (296 aa).

Residues 1 to 131 (MSNYVNDMWP…RSRSRSRERS (131 aa)) are disordered. At Ser-12 the chain carries Phosphoserine. Positions 20–31 (SASRSGGSSRLS) are enriched in low complexity. Basic residues predominate over residues 32–125 (SRSRSRSFSR…RSRSRSRSRS (94 aa)). A phosphoserine mark is found at Ser-111 and Ser-113. Omega-N-methylarginine is present on Arg-141. Over residues 156–165 (ERSRWRDRSR) the composition is skewed to basic and acidic residues. 2 disordered regions span residues 156–175 (ERSRWRDRSRTRSRSRTPFR) and 217–296 (SHGI…WIPV). Polar residues predominate over residues 245 to 261 (EKPSQQRSIAFSSNNSV). Residues 272-287 (ATEETSSRSPKIDKKK) are compositionally biased toward basic and acidic residues. A Phosphoserine modification is found at Ser-280.

This sequence belongs to the RSRP family. In terms of processing, phosphorylated. Phosphorylation at Ser-111 and Ser-113 mediates the interaction with spliceosome proteins.

It is found in the nucleus. In terms of biological role, probably acts as a spliceosomal factor that contributes to spliceosome assembly and regulates the isoform switching of proteins such as PARP6. This chain is Arginine/serine-rich protein 1 (RSRP1), found in Macaca fascicularis (Crab-eating macaque).